Consider the following 510-residue polypeptide: Histidine ammonia-lyase (510 aa).

The 5-imidazolinone (Ala-Gly) cross-link spans alanine 143–glycine 145. Serine 144 carries the 2,3-didehydroalanine (Ser) modification.

This sequence belongs to the PAL/histidase family. In terms of processing, contains an active site 4-methylidene-imidazol-5-one (MIO), which is formed autocatalytically by cyclization and dehydration of residues Ala-Ser-Gly.

The protein localises to the cytoplasm. It carries out the reaction L-histidine = trans-urocanate + NH4(+). Its pathway is amino-acid degradation; L-histidine degradation into L-glutamate; N-formimidoyl-L-glutamate from L-histidine: step 1/3. This Aliivibrio fischeri (strain MJ11) (Vibrio fischeri) protein is Histidine ammonia-lyase.